We begin with the raw amino-acid sequence, 494 residues long: Cytochrome P450 2C44 (494 aa).

Positions 1–25 (MELLGLPTLALLVLVMSLSLLSVWT) are cleaved as a signal peptide. A Phosphoserine modification is found at Ser131. 2 positions are modified to N6-acetyllysine: Lys253 and Lys379. Cys439 is a heme binding site.

The protein belongs to the cytochrome P450 family. Heme serves as cofactor. Highly expressed in liver, particularly in hepatocytes and bile duct epithelial cells (at protein level). Expressed in nephron segments. Prominent expression is detected in proximal tubules at the corticomedullary junction (at protein level). Also expressed in renal cortical collecting duct. Lower expression levels are detected in adrenal glands.

The protein resides in the endoplasmic reticulum membrane. It is found in the microsome membrane. The catalysed reaction is (5Z,8Z,11Z,14Z)-eicosatetraenoate + reduced [NADPH--hemoprotein reductase] + O2 = (8R,9S)-epoxy-(5Z,11Z,14Z)-eicosatrienoate + oxidized [NADPH--hemoprotein reductase] + H2O + H(+). The enzyme catalyses (5Z,8Z,11Z,14Z)-eicosatetraenoate + reduced [NADPH--hemoprotein reductase] + O2 = (11R,12S)-epoxy-(5Z,8Z,14Z)-eicosatrienoate + oxidized [NADPH--hemoprotein reductase] + H2O + H(+). It catalyses the reaction (5Z,8Z,11Z,14Z)-eicosatetraenoate + reduced [NADPH--hemoprotein reductase] + O2 = 14,15-epoxy-(5Z,8Z,11Z)-eicosatrienoate + oxidized [NADPH--hemoprotein reductase] + H2O + H(+). It carries out the reaction (5Z,8Z,11Z,14Z,17Z)-eicosapentaenoate + reduced [NADPH--hemoprotein reductase] + O2 = 8,9-epoxy-(5Z,11Z,14Z,17Z)-eicosatetraenoate + oxidized [NADPH--hemoprotein reductase] + H2O + H(+). The catalysed reaction is (5Z,8Z,11Z,14Z,17Z)-eicosapentaenoate + reduced [NADPH--hemoprotein reductase] + O2 = 11,12-epoxy-(5Z,8Z,14Z,17Z)-eicosatetraenoate + oxidized [NADPH--hemoprotein reductase] + H2O + H(+). The enzyme catalyses (5Z,8Z,11Z,14Z,17Z)-eicosapentaenoate + reduced [NADPH--hemoprotein reductase] + O2 = 14,15-epoxy-(5Z,8Z,11Z,17Z)-eicosatetraenoate + oxidized [NADPH--hemoprotein reductase] + H2O + H(+). It catalyses the reaction (5Z,8Z,11Z,14Z,17Z)-eicosapentaenoate + reduced [NADPH--hemoprotein reductase] + O2 = (17R,18S)-epoxy-(5Z,8Z,11Z,14Z)-eicosatetraenoate + oxidized [NADPH--hemoprotein reductase] + H2O + H(+). It carries out the reaction (5Z,8Z,11Z,14Z,17Z)-eicosapentaenoate + reduced [NADPH--hemoprotein reductase] + O2 = (17S,18R)-epoxy-(5Z,8Z,11Z,14Z)-eicosatetraenoate + oxidized [NADPH--hemoprotein reductase] + H2O + H(+). The catalysed reaction is 20-hydroxy-(5Z,8Z,11Z,14Z)-eicosatetraenoate + reduced [NADPH--hemoprotein reductase] + O2 = 20-hydroxy-8,9-epoxy-(5Z,11Z,14Z)-eicosatrienoate + oxidized [NADPH--hemoprotein reductase] + H2O + H(+). The protein operates within lipid metabolism; arachidonate metabolism. In terms of biological role, a cytochrome P450 monooxygenase involved in polyunsaturated fatty acids (PUFAs) metabolism and signaling. Catalyzes preferentially the epoxidation of double bonds of PUFAs. Converts arachidonic acid (ARA, C20:4(n-6)) primarily to stereospecific products 8R,9S-epoxyeicosatrienoate (EET) and 11R,12S-EET. Plays a major role in the formation of EETs and hydroxy-EETs (HEETs) in kidney. Via EETs may inhibit the epithelial sodium channels (ENaCs) in nephron segments, preventing excessive sodium absorption during high dietary salt intake. Participates in the formation of anti-inflammatory hydroxyepoxyeicosatrienoic acids (HEETs) by converting 20-hydroxyeicosatetraenoic acid (20-HETE) to 20,8,9-HEET, an activator of PPARA. Metabolizes eicosapentaenoic acid (EPA, C20:5(n-3)) to epoxyeicosatetraenoic acid (EETeTr) regioisomers, 8,9-, 11,12-, 14,15-, and 17,18- EETeTr, preferentially producing 17R,18S enantiomer. Mechanistically, uses molecular oxygen inserting one oxygen atom into a substrate, and reducing the second into a water molecule, with two electrons provided by NADPH via cytochrome P450 reductase (CPR; NADPH-ferrihemoprotein reductase). This is Cytochrome P450 2C44 from Mus musculus (Mouse).